Consider the following 163-residue polypeptide: NADH-quinone oxidoreductase subunit I (163 aa).

2 consecutive 4Fe-4S ferredoxin-type domains span residues 53–83 and 94–123; these read LRRY…IEAG and VRYD…EGPN. Residues Cys-63, Cys-66, Cys-69, Cys-73, Cys-103, Cys-106, Cys-109, and Cys-113 each coordinate [4Fe-4S] cluster.

This sequence belongs to the complex I 23 kDa subunit family. In terms of assembly, NDH-1 is composed of 14 different subunits. Subunits NuoA, H, J, K, L, M, N constitute the membrane sector of the complex. It depends on [4Fe-4S] cluster as a cofactor.

The protein resides in the cell inner membrane. It carries out the reaction a quinone + NADH + 5 H(+)(in) = a quinol + NAD(+) + 4 H(+)(out). In terms of biological role, NDH-1 shuttles electrons from NADH, via FMN and iron-sulfur (Fe-S) centers, to quinones in the respiratory chain. The immediate electron acceptor for the enzyme in this species is believed to be ubiquinone. Couples the redox reaction to proton translocation (for every two electrons transferred, four hydrogen ions are translocated across the cytoplasmic membrane), and thus conserves the redox energy in a proton gradient. The sequence is that of NADH-quinone oxidoreductase subunit I from Bartonella henselae (strain ATCC 49882 / DSM 28221 / CCUG 30454 / Houston 1) (Rochalimaea henselae).